We begin with the raw amino-acid sequence, 468 residues long: ATP synthase subunit beta (468 aa).

155–162 (GGAGVGKT) contributes to the ATP binding site.

The protein belongs to the ATPase alpha/beta chains family. In terms of assembly, F-type ATPases have 2 components, CF(1) - the catalytic core - and CF(0) - the membrane proton channel. CF(1) has five subunits: alpha(3), beta(3), gamma(1), delta(1), epsilon(1). CF(0) has three main subunits: a(1), b(2) and c(9-12). The alpha and beta chains form an alternating ring which encloses part of the gamma chain. CF(1) is attached to CF(0) by a central stalk formed by the gamma and epsilon chains, while a peripheral stalk is formed by the delta and b chains.

Its subcellular location is the cell membrane. The catalysed reaction is ATP + H2O + 4 H(+)(in) = ADP + phosphate + 5 H(+)(out). Produces ATP from ADP in the presence of a proton gradient across the membrane. The catalytic sites are hosted primarily by the beta subunits. The sequence is that of ATP synthase subunit beta from Streptococcus pyogenes serotype M3 (strain ATCC BAA-595 / MGAS315).